An 82-amino-acid chain; its full sequence is Cytochrome b559 subunit alpha (82 aa).

Residues 22–36 (VIHAITLPSIFLAGF) form a helical membrane-spanning segment. Position 24 (histidine 24) interacts with heme.

It belongs to the PsbE/PsbF family. In terms of assembly, heterodimer of an alpha subunit and a beta subunit. PSII is composed of 1 copy each of membrane proteins PsbA, PsbB, PsbC, PsbD, PsbE, PsbF, PsbH, PsbI, PsbJ, PsbK, PsbL, PsbM, PsbT, PsbX, PsbY, PsbZ, Psb30/Ycf12, peripheral proteins PsbO, CyanoQ (PsbQ), PsbU, PsbV and a large number of cofactors. It forms dimeric complexes. Requires heme b as cofactor.

The protein resides in the cellular thylakoid membrane. In terms of biological role, this b-type cytochrome is tightly associated with the reaction center of photosystem II (PSII). PSII is a light-driven water:plastoquinone oxidoreductase that uses light energy to abstract electrons from H(2)O, generating O(2) and a proton gradient subsequently used for ATP formation. It consists of a core antenna complex that captures photons, and an electron transfer chain that converts photonic excitation into a charge separation. The sequence is that of Cytochrome b559 subunit alpha from Synechococcus sp. (strain WH7803).